The sequence spans 513 residues: Activin receptor type-2A (513 aa).

A signal peptide spans 1-19; that stretch reads MGAAAKLAFAVFLISCSSG. Topologically, residues 20-135 are extracellular; sequence AILGRSETQE…TSNPVTPKPP (116 aa). Intrachain disulfides connect C30-C60, C50-C78, C85-C104, C91-C103, and C105-C110. N-linked (GlcNAc...) asparagine glycosylation is found at N43 and N66. The chain crosses the membrane as a helical span at residues 136–161; sequence YYNILLYSLVPLMLIAGIVICAFWVY. At 162 to 513 the chain is on the cytoplasmic side; sequence RHHKMAYPPV…VDFPPKESSL (352 aa). The Protein kinase domain maps to 192–485; that stretch reads LQLLEVKARG…GERITQMQRL (294 aa). ATP contacts are provided by residues 198–206 and K219; that span reads KARGRFGCV. D322 acts as the Proton acceptor in catalysis.

The protein belongs to the protein kinase superfamily. TKL Ser/Thr protein kinase family. TGFB receptor subfamily. In terms of assembly, part of a complex consisting of MAGI2/ARIP1, ACVR2A, ACVR1B and SMAD3. Interacts with MAGI2/ARIP1. Interacts with type I receptor ACVR1. Interacts with BMP7. Interacts with TSC22D1/TSC-22. Interacts with activin A/INHBA. Mg(2+) is required as a cofactor. It depends on Mn(2+) as a cofactor.

It is found in the cell membrane. The enzyme catalyses L-threonyl-[receptor-protein] + ATP = O-phospho-L-threonyl-[receptor-protein] + ADP + H(+). It carries out the reaction L-seryl-[receptor-protein] + ATP = O-phospho-L-seryl-[receptor-protein] + ADP + H(+). In terms of biological role, on ligand binding, forms a receptor complex consisting of two type II and two type I transmembrane serine/threonine kinases. Type II receptors phosphorylate and activate type I receptors which autophosphorylate, then bind and activate SMAD transcriptional regulators. Receptor for activin A, activin B and inhibin A. Mediates induction of adipogenesis by GDF6. This is Activin receptor type-2A from Homo sapiens (Human).